We begin with the raw amino-acid sequence, 602 residues long: Elongation factor 4 (602 aa).

In terms of domain architecture, tr-type G spans 8–189 (KNIRNFSIIA…KIITTIPAPS (182 aa)). Residues 20-25 (DHGKST) and 136-139 (NKID) contribute to the GTP site.

The protein belongs to the TRAFAC class translation factor GTPase superfamily. Classic translation factor GTPase family. LepA subfamily.

It is found in the cell inner membrane. It carries out the reaction GTP + H2O = GDP + phosphate + H(+). Functionally, required for accurate and efficient protein synthesis under certain stress conditions. May act as a fidelity factor of the translation reaction, by catalyzing a one-codon backward translocation of tRNAs on improperly translocated ribosomes. Back-translocation proceeds from a post-translocation (POST) complex to a pre-translocation (PRE) complex, thus giving elongation factor G a second chance to translocate the tRNAs correctly. Binds to ribosomes in a GTP-dependent manner. In Helicobacter pylori (strain G27), this protein is Elongation factor 4.